A 950-amino-acid polypeptide reads, in one-letter code: Inactive atromentin synthetase invA4 (950 aa).

The interval 37–460 (SRAVSQYPNH…SGRIKDTVVV (424 aa)) is adenylation (A) domain. Positions 592–670 (APSTETEKTL…TLAKYVDSLV (79 aa)) constitute a Carrier domain. Residues 597 to 667 (TEKTLAGIYA…EIITLAKYVD (71 aa)) form a thiolation and peptide carrier (T) domain region. Ser-629 carries the O-(pantetheine 4'-phosphoryl)serine modification. A thioesterase (TE) domain region spans residues 693–797 (PIFMVHPGIG…GIIDMIPHHM (105 aa)).

Belongs to the ATP-dependent AMP-binding enzyme family.

Its function is as follows. Inactive atromentin synthetase homolog. Does not accept 4-hydroxyphenylpyruvate (4-HPP) as substrate. This Paxillus involutus (Naked brimcap) protein is Inactive atromentin synthetase invA4 (invA4).